The primary structure comprises 362 residues: Ribosomal RNA large subunit methyltransferase M (362 aa).

S-adenosyl-L-methionine-binding positions include Ser187, 220 to 223 (CPGG), Asp239, Asp259, and Asp276. Catalysis depends on Lys305, which acts as the Proton acceptor.

Belongs to the class I-like SAM-binding methyltransferase superfamily. RNA methyltransferase RlmE family. RlmM subfamily. In terms of assembly, monomer.

The protein resides in the cytoplasm. It catalyses the reaction cytidine(2498) in 23S rRNA + S-adenosyl-L-methionine = 2'-O-methylcytidine(2498) in 23S rRNA + S-adenosyl-L-homocysteine + H(+). Its function is as follows. Catalyzes the 2'-O-methylation at nucleotide C2498 in 23S rRNA. In Shewanella frigidimarina (strain NCIMB 400), this protein is Ribosomal RNA large subunit methyltransferase M.